Consider the following 311-residue polypeptide: tRNA-cytidine(32) 2-sulfurtransferase (311 aa).

The short motif at 47–52 (SGGKDS) is the PP-loop motif element. [4Fe-4S] cluster-binding residues include cysteine 122, cysteine 125, and cysteine 213.

Belongs to the TtcA family. Homodimer. Mg(2+) serves as cofactor. It depends on [4Fe-4S] cluster as a cofactor.

It is found in the cytoplasm. The catalysed reaction is cytidine(32) in tRNA + S-sulfanyl-L-cysteinyl-[cysteine desulfurase] + AH2 + ATP = 2-thiocytidine(32) in tRNA + L-cysteinyl-[cysteine desulfurase] + A + AMP + diphosphate + H(+). The protein operates within tRNA modification. Its function is as follows. Catalyzes the ATP-dependent 2-thiolation of cytidine in position 32 of tRNA, to form 2-thiocytidine (s(2)C32). The sulfur atoms are provided by the cysteine/cysteine desulfurase (IscS) system. The chain is tRNA-cytidine(32) 2-sulfurtransferase from Salmonella paratyphi B (strain ATCC BAA-1250 / SPB7).